The following is a 208-amino-acid chain: Endo-1,4-beta-xylanase B (208 aa).

The signal sequence occupies residues 1–16 (MKVTAAFAGLLATTLA). The 191-residue stretch at 17-207 (APATELVTRS…GTGTASVTVS (191 aa)) folds into the GH11 domain. Glu101 serves as the catalytic Nucleophile. Glu194 (proton donor) is an active-site residue.

It belongs to the glycosyl hydrolase 11 (cellulase G) family.

It is found in the secreted. It carries out the reaction Endohydrolysis of (1-&gt;4)-beta-D-xylosidic linkages in xylans.. Its pathway is glycan degradation; xylan degradation. With respect to regulation, N-bromosuccinimide completely inhibits the catalytic activity. Functionally, endo-1,4-beta-xylanase involved in the hydrolysis of xylan, a major structural heterogeneous polysaccharide found in plant biomass representing the second most abundant polysaccharide in the biosphere, after cellulose. The protein is Endo-1,4-beta-xylanase B (xynB) of Talaromyces purpureogenus (Soft rot fungus).